We begin with the raw amino-acid sequence, 163 residues long: 6,7-dimethyl-8-ribityllumazine synthase 1 (163 aa).

5-amino-6-(D-ribitylamino)uracil is bound by residues Phe27, 58 to 60 (ALE), and 87 to 89 (CVV). Residue 92 to 93 (ET) participates in (2S)-2-hydroxy-3-oxobutyl phosphate binding. The Proton donor role is filled by His95. Asn120 serves as a coordination point for 5-amino-6-(D-ribitylamino)uracil. Arg134 contributes to the (2S)-2-hydroxy-3-oxobutyl phosphate binding site.

This sequence belongs to the DMRL synthase family.

The catalysed reaction is (2S)-2-hydroxy-3-oxobutyl phosphate + 5-amino-6-(D-ribitylamino)uracil = 6,7-dimethyl-8-(1-D-ribityl)lumazine + phosphate + 2 H2O + H(+). Its pathway is cofactor biosynthesis; riboflavin biosynthesis; riboflavin from 2-hydroxy-3-oxobutyl phosphate and 5-amino-6-(D-ribitylamino)uracil: step 1/2. Functionally, catalyzes the formation of 6,7-dimethyl-8-ribityllumazine by condensation of 5-amino-6-(D-ribitylamino)uracil with 3,4-dihydroxy-2-butanone 4-phosphate. This is the penultimate step in the biosynthesis of riboflavin. This chain is 6,7-dimethyl-8-ribityllumazine synthase 1, found in Rhodopseudomonas palustris (strain ATCC BAA-98 / CGA009).